The primary structure comprises 454 residues: Jacalin-related lectin 37 (454 aa).

The region spanning 295–438 (SRFTPPRGIQ…LTALGVHFSP (144 aa)) is the Jacalin-type lectin domain.

Belongs to the jacalin lectin family.

This Arabidopsis thaliana (Mouse-ear cress) protein is Jacalin-related lectin 37 (JAL37).